A 463-amino-acid polypeptide reads, in one-letter code: Glycine--tRNA ligase (463 aa).

Positions 100 and 175 each coordinate substrate. ATP-binding positions include 207 to 209 (RNE), 217 to 222 (FRTREF), 291 to 292 (EL), and 335 to 338 (GADR). 222-226 (FEQME) contacts substrate. 331–335 (EPSLG) is a substrate binding site.

Belongs to the class-II aminoacyl-tRNA synthetase family. Homodimer.

The protein resides in the cytoplasm. The catalysed reaction is tRNA(Gly) + glycine + ATP = glycyl-tRNA(Gly) + AMP + diphosphate. Catalyzes the attachment of glycine to tRNA(Gly). This Clostridium beijerinckii (strain ATCC 51743 / NCIMB 8052) (Clostridium acetobutylicum) protein is Glycine--tRNA ligase.